A 208-amino-acid chain; its full sequence is Small ribosomal subunit protein uS4 (208 aa).

In terms of domain architecture, S4 RNA-binding spans 98 to 161 (TRLDNTVYRL…RKIPVIAEAQ (64 aa)).

It belongs to the universal ribosomal protein uS4 family. As to quaternary structure, part of the 30S ribosomal subunit. Contacts protein S5. The interaction surface between S4 and S5 is involved in control of translational fidelity.

One of the primary rRNA binding proteins, it binds directly to 16S rRNA where it nucleates assembly of the body of the 30S subunit. Functionally, with S5 and S12 plays an important role in translational accuracy. The chain is Small ribosomal subunit protein uS4 from Maridesulfovibrio salexigens (strain ATCC 14822 / DSM 2638 / NCIMB 8403 / VKM B-1763) (Desulfovibrio salexigens).